The chain runs to 642 residues: Threonine--tRNA ligase (642 aa).

The TGS domain maps to Met-1–Thr-61. The tract at residues Asp-243–Pro-534 is catalytic. The Zn(2+) site is built by Cys-334, His-385, and His-511.

It belongs to the class-II aminoacyl-tRNA synthetase family. In terms of assembly, homodimer. The cofactor is Zn(2+).

The protein resides in the cytoplasm. It carries out the reaction tRNA(Thr) + L-threonine + ATP = L-threonyl-tRNA(Thr) + AMP + diphosphate + H(+). Catalyzes the attachment of threonine to tRNA(Thr) in a two-step reaction: L-threonine is first activated by ATP to form Thr-AMP and then transferred to the acceptor end of tRNA(Thr). Also edits incorrectly charged L-seryl-tRNA(Thr). This is Threonine--tRNA ligase from Histophilus somni (strain 129Pt) (Haemophilus somnus).